The chain runs to 225 residues: Putative elongation factor 1 gamma homolog (225 aa).

The 132-residue stretch at 94–225 folds into the GST C-terminal domain; sequence DFKTRADILR…MCETEMQPIK (132 aa).

This Saccharomyces cerevisiae (strain ATCC 204508 / S288c) (Baker's yeast) protein is Putative elongation factor 1 gamma homolog.